The primary structure comprises 364 residues: Dihydroorotate dehydrogenase (quinone) (364 aa).

FMN is bound by residues 61 to 65 (AGFDK) and Thr-85. Position 65 (Lys-65) interacts with substrate. 110–114 (NRMGF) lines the substrate pocket. Positions 139 and 170 each coordinate FMN. Asn-170 provides a ligand contact to substrate. Ser-173 (nucleophile) is an active-site residue. Residue Asn-175 participates in substrate binding. FMN-binding residues include Lys-214 and Ala-242. 243–244 (NT) contributes to the substrate binding site. FMN is bound by residues Gly-266, Gly-295, and 316 to 317 (YS).

It belongs to the dihydroorotate dehydrogenase family. Type 2 subfamily. As to quaternary structure, monomer. It depends on FMN as a cofactor.

It is found in the cell membrane. It catalyses the reaction (S)-dihydroorotate + a quinone = orotate + a quinol. Its pathway is pyrimidine metabolism; UMP biosynthesis via de novo pathway; orotate from (S)-dihydroorotate (quinone route): step 1/1. Catalyzes the conversion of dihydroorotate to orotate with quinone as electron acceptor. The chain is Dihydroorotate dehydrogenase (quinone) from Rhodopseudomonas palustris (strain TIE-1).